The primary structure comprises 357 residues: G-protein coupled receptor 183 (357 aa).

Residues 1–32 lie on the Extracellular side of the membrane; that stretch reads MANNFTTPLAASHGNNCDLYAHHSTARILMPL. The N-linked (GlcNAc...) asparagine glycan is linked to N4. Residues 33 to 53 traverse the membrane as a helical segment; sequence HYSLVFIIGLVGNLLALVVIV. At 54–68 the chain is on the cytoplasmic side; that stretch reads QNRKKINSTTLYSMN. Residues 69–89 form a helical membrane-spanning segment; that stretch reads LVISDILFTTALPTRIVYYAL. Position 83 (R83) interacts with 7alpha,25-dihydroxycholesterol. Over 90–101 the chain is Extracellular; sequence GFDWRIGDALCR. A disulfide bridge connects residues C100 and C177. Residues 102–122 traverse the membrane as a helical segment; it reads ITALLFYINTYAGVNFMTCLS. 7alpha,25-dihydroxycholesterol contacts are provided by Y108 and Y112. Residues 122-130 are interaction with G proteins; that stretch reads SIDRFFAVV. Topologically, residues 123-143 are cytoplasmic; sequence IDRFFAVVHPLRYNKIKRIEY. A helical transmembrane segment spans residues 144–164; sequence AKGICVFVWILVFAQTLPLLL. Over 165-190 the chain is Extracellular; the sequence is KPMSKQEADKTTCMEYPNFEGTASLP. The chain crosses the membrane as a helical span at residues 191–211; sequence WILLGACLLGYVLPLAIILLC. Residues 212 to 240 lie on the Cytoplasmic side of the membrane; the sequence is YSQICCKLFRTAKQNPLTEKSGVNKKALN. A helical membrane pass occupies residues 241-261; sequence TIILIIGVFVLCFTPYHVAIM. Y256 is a 7alpha,25-dihydroxycholesterol binding site. Residues 262–287 lie on the Extracellular side of the membrane; sequence QHMVKTLYAPGALGCGVRHSFQISLH. A helical transmembrane segment spans residues 288 to 308; it reads FTVCLMNFNCCMDPFIYFFAC. Residues 309-357 lie on the Cytoplasmic side of the membrane; sequence KGYKRKVMKMLKRQVSVSISSAVRSAPEENSREMTESQMMIHSKASNGR. Phosphoserine occurs at positions 324 and 345. A disordered region spans residues 336–357; the sequence is EENSREMTESQMMIHSKASNGR. Over residues 344–357 the composition is skewed to polar residues; that stretch reads ESQMMIHSKASNGR.

Belongs to the G-protein coupled receptor 1 family. As to quaternary structure, homodimer and heterodimer. Heterodimerizes with CXCR5; leading to modulate the interaction between of CXCL13 and CXCR5.

It is found in the cell membrane. Functionally, G-protein coupled receptor expressed in lymphocytes that acts as a chemotactic receptor for B-cells, T-cells, splenic dendritic cells, monocytes/macrophages and astrocytes. Receptor for oxysterol 7-alpha,25-dihydroxycholesterol (7-alpha,25-OHC) and other related oxysterols. Mediates cell positioning and movement of a number of cells by binding the 7-alpha,25-OHC ligand that forms a chemotactic gradient. Binding of 7-alpha,25-OHC mediates the correct localization of B-cells during humoral immune responses. Guides B-cell movement along the B-cell zone-T-cell zone boundary and later to interfollicular and outer follicular regions. Its specific expression during B-cell maturation helps position B-cells appropriately for mounting T-dependent antibody responses. Collaborates with CXCR5 to mediate B-cell migration; probably by forming a heterodimer with CXCR5 that affects the interaction between of CXCL13 and CXCR5. Also acts as a chemotactic receptor for some T-cells upon binding to 7-alpha,25-OHC ligand. Promotes follicular helper T (Tfh) cells differentiation by positioning activated T-cells at the follicle-T-zone interface, promoting contact of newly activated CD4 T-cells with activated dendritic cells and exposing them to Tfh-cell-promoting inducible costimulator (ICOS) ligand. Expression in splenic dendritic cells is required for their homeostasis, localization and ability to induce B- and T-cell responses: GPR183 acts as a chemotactic receptor in dendritic cells that mediates the accumulation of CD4(+) dendritic cells in bridging channels. Regulates migration of astrocytes and is involved in communication between astrocytes and macrophages. Promotes osteoclast precursor migration to bone surfaces. Signals constitutively through G(i)-alpha, but not G(s)-alpha or G(q)-alpha. Signals constitutively also via MAPK1/3 (ERK1/2). The protein is G-protein coupled receptor 183 (Gpr183) of Rattus norvegicus (Rat).